The following is a 158-amino-acid chain: 2-C-methyl-D-erythritol 2,4-cyclodiphosphate synthase (158 aa).

A divalent metal cation contacts are provided by Asp9 and His11. 4-CDP-2-C-methyl-D-erythritol 2-phosphate is bound by residues 9–11 (DVH) and 35–36 (HS). His43 provides a ligand contact to a divalent metal cation. 4-CDP-2-C-methyl-D-erythritol 2-phosphate contacts are provided by residues 57–59 (DIG), 62–66 (FPDTD), 133–136 (TTTE), Phe140, and Arg143.

Belongs to the IspF family. In terms of assembly, homotrimer. Requires a divalent metal cation as cofactor.

It carries out the reaction 4-CDP-2-C-methyl-D-erythritol 2-phosphate = 2-C-methyl-D-erythritol 2,4-cyclic diphosphate + CMP. The protein operates within isoprenoid biosynthesis; isopentenyl diphosphate biosynthesis via DXP pathway; isopentenyl diphosphate from 1-deoxy-D-xylulose 5-phosphate: step 4/6. In terms of biological role, involved in the biosynthesis of isopentenyl diphosphate (IPP) and dimethylallyl diphosphate (DMAPP), two major building blocks of isoprenoid compounds. Catalyzes the conversion of 4-diphosphocytidyl-2-C-methyl-D-erythritol 2-phosphate (CDP-ME2P) to 2-C-methyl-D-erythritol 2,4-cyclodiphosphate (ME-CPP) with a corresponding release of cytidine 5-monophosphate (CMP). The chain is 2-C-methyl-D-erythritol 2,4-cyclodiphosphate synthase from Geobacillus kaustophilus (strain HTA426).